The sequence spans 456 residues: ATP synthase subunit beta (456 aa).

Position 135 to 142 (135 to 142 (GGAGVGKT)) interacts with ATP.

It belongs to the ATPase alpha/beta chains family. In terms of assembly, F-type ATPases have 2 components, CF(1) - the catalytic core - and CF(0) - the membrane proton channel. CF(1) has five subunits: alpha(3), beta(3), gamma(1), delta(1), epsilon(1). CF(0) has four main subunits: a(1), b(1), b'(1) and c(9-12).

It localises to the cellular thylakoid membrane. It carries out the reaction ATP + H2O + 4 H(+)(in) = ADP + phosphate + 5 H(+)(out). Functionally, produces ATP from ADP in the presence of a proton gradient across the membrane. The catalytic sites are hosted primarily by the beta subunits. This is ATP synthase subunit beta (atpD) from Acaryochloris marina (strain MBIC 11017).